The chain runs to 152 residues: UPF0735 ACT domain-containing protein CTC_00116 (152 aa).

The region spanning 76–151 (IISVTLNHRP…NVIKLDLIAM (76 aa)) is the ACT domain.

It belongs to the UPF0735 family.

The polypeptide is UPF0735 ACT domain-containing protein CTC_00116 (Clostridium tetani (strain Massachusetts / E88)).